The following is a 362-amino-acid chain: S-adenosylmethionine decarboxylase proenzyme (362 aa).

Active-site residues include Glu11 and Glu14. Ser71 (schiff-base intermediate with substrate; via pyruvic acid) is an active-site residue. Ser71 carries the post-translational modification Pyruvic acid (Ser); by autocatalysis. Residue Cys85 is the Proton donor; for catalytic activity of the active site. Catalysis depends on proton acceptor; for processing activity residues Ser234 and His247.

The protein belongs to the eukaryotic AdoMetDC family. Pyruvate is required as a cofactor. In terms of processing, is synthesized initially as an inactive proenzyme. Formation of the active enzyme involves a self-maturation process in which the active site pyruvoyl group is generated from an internal serine residue via an autocatalytic post-translational modification. Two non-identical subunits are generated from the proenzyme in this reaction, and the pyruvate is formed at the N-terminus of the alpha chain, which is derived from the carboxyl end of the proenzyme. The post-translation cleavage follows an unusual pathway, termed non-hydrolytic serinolysis, in which the side chain hydroxyl group of the serine supplies its oxygen atom to form the C-terminus of the beta chain, while the remainder of the serine residue undergoes an oxidative deamination to produce ammonia and the pyruvoyl group blocking the N-terminus of the alpha chain.

The enzyme catalyses S-adenosyl-L-methionine + H(+) = S-adenosyl 3-(methylsulfanyl)propylamine + CO2. It participates in amine and polyamine biosynthesis; S-adenosylmethioninamine biosynthesis; S-adenosylmethioninamine from S-adenosyl-L-methionine: step 1/1. In Ipomoea nil (Japanese morning glory), this protein is S-adenosylmethionine decarboxylase proenzyme (SAMDC).